The sequence spans 436 residues: Glutamyl-tRNA reductase (436 aa).

Substrate-binding positions include 49–52 (TCNR), serine 109, 114–116 (EGQ), and glutamine 120. Catalysis depends on cysteine 50, which acts as the Nucleophile. 198-203 (GAGRMS) contacts NADP(+).

Belongs to the glutamyl-tRNA reductase family. Homodimer.

It carries out the reaction (S)-4-amino-5-oxopentanoate + tRNA(Glu) + NADP(+) = L-glutamyl-tRNA(Glu) + NADPH + H(+). The protein operates within porphyrin-containing compound metabolism; protoporphyrin-IX biosynthesis; 5-aminolevulinate from L-glutamyl-tRNA(Glu): step 1/2. It functions in the pathway porphyrin-containing compound metabolism; chlorophyll biosynthesis. Functionally, catalyzes the NADPH-dependent reduction of glutamyl-tRNA(Glu) to glutamate 1-semialdehyde (GSA). This chain is Glutamyl-tRNA reductase, found in Prochlorococcus marinus (strain MIT 9313).